A 105-amino-acid polypeptide reads, in one-letter code: Pyruvate synthase subunit PorD (105 aa).

2 consecutive 4Fe-4S ferredoxin-type domains span residues 44–73 and 74–103; these read FRPE…LDEE and GYPV…MVRE. 8 residues coordinate [4Fe-4S] cluster: Cys53, Cys56, Cys59, Cys63, Cys83, Cys86, Cys89, and Cys93.

In terms of assembly, heterotetramer of one alpha, one beta, one delta and one gamma chain. Requires [4Fe-4S] cluster as cofactor.

The protein is Pyruvate synthase subunit PorD (porD) of Pyrococcus abyssi (strain GE5 / Orsay).